We begin with the raw amino-acid sequence, 221 residues long: Enolase-phosphatase E1 (221 aa).

Belongs to the HAD-like hydrolase superfamily. MasA/MtnC family. As to quaternary structure, monomer. It depends on Mg(2+) as a cofactor.

It carries out the reaction 5-methylsulfanyl-2,3-dioxopentyl phosphate + H2O = 1,2-dihydroxy-5-(methylsulfanyl)pent-1-en-3-one + phosphate. Its pathway is amino-acid biosynthesis; L-methionine biosynthesis via salvage pathway; L-methionine from S-methyl-5-thio-alpha-D-ribose 1-phosphate: step 3/6. The protein operates within amino-acid biosynthesis; L-methionine biosynthesis via salvage pathway; L-methionine from S-methyl-5-thio-alpha-D-ribose 1-phosphate: step 4/6. Functionally, bifunctional enzyme that catalyzes the enolization of 2,3-diketo-5-methylthiopentyl-1-phosphate (DK-MTP-1-P) into the intermediate 2-hydroxy-3-keto-5-methylthiopentenyl-1-phosphate (HK-MTPenyl-1-P), which is then dephosphorylated to form the acireductone 1,2-dihydroxy-3-keto-5-methylthiopentene (DHK-MTPene). This Xanthobacter autotrophicus (strain ATCC BAA-1158 / Py2) protein is Enolase-phosphatase E1.